The sequence spans 162 residues: uncharacterized protein (162 aa).

The signal sequence occupies residues 1–24 (MKRGVATLPVILVILLSVAAGAGA).

This is an uncharacterized protein from Mycobacterium bovis (strain ATCC BAA-935 / AF2122/97).